Here is a 131-residue protein sequence, read N- to C-terminus: Small ribosomal subunit protein uS11 (131 aa).

Belongs to the universal ribosomal protein uS11 family. Part of the 30S ribosomal subunit. Interacts with proteins S7 and S18. Binds to IF-3.

Its function is as follows. Located on the platform of the 30S subunit, it bridges several disparate RNA helices of the 16S rRNA. Forms part of the Shine-Dalgarno cleft in the 70S ribosome. This Deinococcus radiodurans (strain ATCC 13939 / DSM 20539 / JCM 16871 / CCUG 27074 / LMG 4051 / NBRC 15346 / NCIMB 9279 / VKM B-1422 / R1) protein is Small ribosomal subunit protein uS11.